We begin with the raw amino-acid sequence, 400 residues long: Formate-dependent phosphoribosylglycinamide formyltransferase (400 aa).

Residues 22 to 23 and E82 each bind N(1)-(5-phospho-beta-D-ribosyl)glycinamide; that span reads EL. ATP-binding positions include R115, K157, 162–167, 197–200, and E205; these read SSGKGQ and EGFV. The ATP-grasp domain occupies 120–315; it reads RLAAETLGVP…EFELHARAIL (196 aa). Mg(2+) is bound by residues E274 and E286. Residues D293, K362, and 369–370 contribute to the N(1)-(5-phospho-beta-D-ribosyl)glycinamide site; that span reads RR.

It belongs to the PurK/PurT family. In terms of assembly, homodimer.

It carries out the reaction N(1)-(5-phospho-beta-D-ribosyl)glycinamide + formate + ATP = N(2)-formyl-N(1)-(5-phospho-beta-D-ribosyl)glycinamide + ADP + phosphate + H(+). It functions in the pathway purine metabolism; IMP biosynthesis via de novo pathway; N(2)-formyl-N(1)-(5-phospho-D-ribosyl)glycinamide from N(1)-(5-phospho-D-ribosyl)glycinamide (formate route): step 1/1. Involved in the de novo purine biosynthesis. Catalyzes the transfer of formate to 5-phospho-ribosyl-glycinamide (GAR), producing 5-phospho-ribosyl-N-formylglycinamide (FGAR). Formate is provided by PurU via hydrolysis of 10-formyl-tetrahydrofolate. This is Formate-dependent phosphoribosylglycinamide formyltransferase from Mycolicibacterium smegmatis (strain ATCC 700084 / mc(2)155) (Mycobacterium smegmatis).